Here is a 121-residue protein sequence, read N- to C-terminus: Large ribosomal subunit protein bL12 (121 aa).

The protein belongs to the bacterial ribosomal protein bL12 family. Homodimer. Part of the ribosomal stalk of the 50S ribosomal subunit. Forms a multimeric L10(L12)X complex, where L10 forms an elongated spine to which 2 to 4 L12 dimers bind in a sequential fashion. Binds GTP-bound translation factors.

In terms of biological role, forms part of the ribosomal stalk which helps the ribosome interact with GTP-bound translation factors. Is thus essential for accurate translation. The protein is Large ribosomal subunit protein bL12 of Clostridium perfringens (strain ATCC 13124 / DSM 756 / JCM 1290 / NCIMB 6125 / NCTC 8237 / Type A).